Here is a 156-residue protein sequence, read N- to C-terminus: MQIIEGKLQLQGNERVAILTSRFNHIITDRLKEGAMDCFKRHGGDEKLLDIVLVPGAYELPLILDKLLESEKYDGVCVLGAIIRGGTPHFDYVSAEATKGIASAMLKYSMPVSFGVLTTDNIEQAIERAGSKAGNKGFEAMSTLIELLSLCQTLKG.

5-amino-6-(D-ribitylamino)uracil-binding positions include Phe-23, 57–59 (AYE), and 81–83 (AII). 86–87 (GT) contacts (2S)-2-hydroxy-3-oxobutyl phosphate. His-89 (proton donor) is an active-site residue. Position 114 (Phe-114) interacts with 5-amino-6-(D-ribitylamino)uracil. Residue Arg-128 coordinates (2S)-2-hydroxy-3-oxobutyl phosphate.

Belongs to the DMRL synthase family.

It catalyses the reaction (2S)-2-hydroxy-3-oxobutyl phosphate + 5-amino-6-(D-ribitylamino)uracil = 6,7-dimethyl-8-(1-D-ribityl)lumazine + phosphate + 2 H2O + H(+). It participates in cofactor biosynthesis; riboflavin biosynthesis; riboflavin from 2-hydroxy-3-oxobutyl phosphate and 5-amino-6-(D-ribitylamino)uracil: step 1/2. Functionally, catalyzes the formation of 6,7-dimethyl-8-ribityllumazine by condensation of 5-amino-6-(D-ribitylamino)uracil with 3,4-dihydroxy-2-butanone 4-phosphate. This is the penultimate step in the biosynthesis of riboflavin. This is 6,7-dimethyl-8-ribityllumazine synthase from Helicobacter pylori (strain G27).